The following is a 374-amino-acid chain: Eukaryotic translation initiation factor 3 subunit M (374 aa).

The region spanning 180–339 is the PCI domain; it reads TAAKVMVELL…RKVVVSHSTH (160 aa).

It belongs to the eIF-3 subunit M family. As to quaternary structure, component of the eukaryotic translation initiation factor 3 (eIF-3) complex, which is composed of 13 subunits: EIF3A, EIF3B, EIF3C, EIF3D, EIF3E, EIF3F, EIF3G, EIF3H, EIF3I, EIF3J, EIF3K, EIF3L and EIF3M.

Its subcellular location is the cytoplasm. Its function is as follows. Component of the eukaryotic translation initiation factor 3 (eIF-3) complex, which is involved in protein synthesis of a specialized repertoire of mRNAs and, together with other initiation factors, stimulates binding of mRNA and methionyl-tRNAi to the 40S ribosome. The eIF-3 complex specifically targets and initiates translation of a subset of mRNAs involved in cell proliferation. The sequence is that of Eukaryotic translation initiation factor 3 subunit M from Gallus gallus (Chicken).